Reading from the N-terminus, the 396-residue chain is Gap junction gamma-1 protein (396 aa).

Residues 1–22 are Cytoplasmic-facing; the sequence is MSWSFLTRLLEEIHNHSTFVGK. A helical transmembrane segment spans residues 23-45; the sequence is IWLTVLIVFRIVLTAVGGESIYY. Over 46–75 the chain is Extracellular; it reads DEQSKFVCNTEQPGCENVCYDAFAPLSHVR. The helical transmembrane segment at 76-95 threads the bilayer; that stretch reads FWVFQIILVATPSVMYLGYA. The Cytoplasmic portion of the chain corresponds to 96–175; it reads IHKIAKMEHG…RRIREDGLMK (80 aa). Residues 145–165 are disordered; sequence ELESDKENKEQSQPKPKHDGR. The span at 147–156 shows a compositional bias: basic and acidic residues; it reads ESDKENKEQS. The chain crosses the membrane as a helical span at residues 176–198; it reads IYVLQLLARTVFEVGFLIGQYFL. Over 199-228 the chain is Extracellular; it reads YGFQVHPFYVCSRLPCPHKIDCFISRPTEK. The chain crosses the membrane as a helical span at residues 229–248; sequence TIFLLIMYGVTGLCLLLNIW. Residues 249–396 are Cytoplasmic-facing; the sequence is EMLHLGFGTI…SGDGKTSVWI (148 aa). The disordered stretch occupies residues 353–396; it reads VQAYSHQNNPHGPREKKAKVGSKAGSNKSTASSKSGDGKTSVWI. Residues 376–387 are compositionally biased toward polar residues; it reads AGSNKSTASSKS.

It belongs to the connexin family. Gamma-type subfamily. A connexon is composed of a hexamer of connexins. Interacts with CNST.

It localises to the cell membrane. It is found in the cell junction. The protein resides in the gap junction. One gap junction consists of a cluster of closely packed pairs of transmembrane channels, the connexons, through which materials of low MW diffuse from one cell to a neighboring cell. In Homo sapiens (Human), this protein is Gap junction gamma-1 protein (GJC1).